A 372-amino-acid polypeptide reads, in one-letter code: Chaperone protein DnaJ (372 aa).

Residues 5–70 (SYYDILGVSK…KKRQAYDQFG (66 aa)) enclose the J domain. A CR-type zinc finger spans residues 140 to 218 (GREYKIEIPR…CGGQGLQEKR (79 aa)). Residues Cys-153, Cys-156, Cys-170, Cys-173, Cys-192, Cys-195, Cys-206, and Cys-209 each coordinate Zn(2+). CXXCXGXG motif repeat units lie at residues 153-160 (CVDCNGSG), 170-177 (CPDCGGSG), 192-199 (CPTCRGKG), and 206-213 (CRSCGGQG).

This sequence belongs to the DnaJ family. Homodimer. Zn(2+) is required as a cofactor.

The protein localises to the cytoplasm. Participates actively in the response to hyperosmotic and heat shock by preventing the aggregation of stress-denatured proteins and by disaggregating proteins, also in an autonomous, DnaK-independent fashion. Unfolded proteins bind initially to DnaJ; upon interaction with the DnaJ-bound protein, DnaK hydrolyzes its bound ATP, resulting in the formation of a stable complex. GrpE releases ADP from DnaK; ATP binding to DnaK triggers the release of the substrate protein, thus completing the reaction cycle. Several rounds of ATP-dependent interactions between DnaJ, DnaK and GrpE are required for fully efficient folding. Also involved, together with DnaK and GrpE, in the DNA replication of plasmids through activation of initiation proteins. This chain is Chaperone protein DnaJ, found in Leptospira interrogans serogroup Icterohaemorrhagiae serovar copenhageni (strain Fiocruz L1-130).